The following is a 1493-amino-acid chain: Mitogen-activated protein kinase kinase kinase 1 (1493 aa).

Over residues 1–23 (MAAAAGDRASSSGFPGAAAASPE) the composition is skewed to low complexity. Disordered regions lie at residues 1-178 (MAAA…PEER) and 194-300 (HEWL…EETS). The residue at position 2 (A2) is an N-acetylalanine. Residue S21 is modified to Phosphoserine. The segment covering 24 to 35 (AGGGGGGGGALQ) has biased composition (gly residues). Residues 36–46 (GSGAPAAGAAG) are compositionally biased toward low complexity. Positions 89–99 (PPCPSTSPSPE) are enriched in pro residues. Positions 140-156 (ARSPAGAEPPSAAAPSG) are enriched in low complexity. Position 142 is a phosphoserine (S142). Over residues 157 to 178 (REMENKETLKGLHKMEDRPEER) the composition is skewed to basic and acidic residues. A compositionally biased stretch (low complexity) spans 235–256 (SAAPAPKGRRSPSPGSSPSGRS). S270 carries the post-translational modification Phosphoserine. Phosphothreonine is present on T280. Phosphoserine occurs at positions 287, 292, and 295. An SWIM-type zinc finger spans residues 333-361 (YRVFIGPQNCSCGRGAFCIHLLFVMLRVF). The span at 411-428 (SNSHTLSSSSTSTSSSEN) shows a compositional bias: low complexity. Residues 411-431 (SNSHTLSSSSTSTSSSENSIK) are disordered. The RING-type zinc-finger motif lies at 438–487 (CPICLLGMLDEESLTVCEDGCRNKLHHHCMSIWAEECRRNREPLICPLCR). S502 and S526 each carry phosphoserine. 2 disordered regions span residues 506–531 (SPAS…RRNQ) and 895–914 (EHTV…RLSA). Residues 512–527 (AVQQPSSPQQPVAGSQ) show a composition bias toward low complexity. S915 carries the post-translational modification Phosphoserine. Disordered stretches follow at residues 927-957 (SVGL…LNSS) and 992-1066 (PCKI…TLDL). Polar residues predominate over residues 998-1013 (ASPQTQRKFSLQFQRN). A phosphoserine mark is found at S999 and S1024. The segment covering 1049-1063 (GSTSKLGDATKSSMT) has biased composition (polar residues). Positions 1224-1489 (WLKGQQIGLG…SRELLKHPVF (266 aa)) constitute a Protein kinase domain. Residues 1230-1238 (IGLGAFSSC) and K1253 each bind ATP. The active-site Proton acceptor is D1350. Phosphothreonine; by autocatalysis occurs at positions 1381 and 1393.

The protein belongs to the protein kinase superfamily. STE Ser/Thr protein kinase family. MAP kinase kinase kinase subfamily. Binds both upstream activators and downstream substrates in multimolecular complexes through its N-terminus. Oligomerizes after binding MAP4K2 or TRAF2. Interacts with AXIN1. Interacts (via the kinase catalytic domain) with STK38. Interacts with GRIPAP1. Mg(2+) serves as cofactor. In terms of processing, autophosphorylated. In terms of tissue distribution, highly expressed in the heart and spleen while a lower level expression is seen in the liver.

The enzyme catalyses L-seryl-[protein] + ATP = O-phospho-L-seryl-[protein] + ADP + H(+). It carries out the reaction L-threonyl-[protein] + ATP = O-phospho-L-threonyl-[protein] + ADP + H(+). Its activity is regulated as follows. Activated by autophosphorylation on Thr-1381 and Thr-1393 following oligomerization. Component of a protein kinase signal transduction cascade. Activates the ERK and JNK kinase pathways by phosphorylation of MAP2K1 and MAP2K4. May phosphorylate the MAPK8/JNK1 kinase. Activates CHUK and IKBKB, the central protein kinases of the NF-kappa-B pathway. The sequence is that of Mitogen-activated protein kinase kinase kinase 1 (Map3k1) from Mus musculus (Mouse).